The primary structure comprises 503 residues: Probable cytosol aminopeptidase (503 aa).

Mn(2+) contacts are provided by K271 and D276. Residue K283 is part of the active site. Mn(2+) contacts are provided by D294, D353, and E355. R357 is an active-site residue.

The protein belongs to the peptidase M17 family. It depends on Mn(2+) as a cofactor.

Its subcellular location is the cytoplasm. It carries out the reaction Release of an N-terminal amino acid, Xaa-|-Yaa-, in which Xaa is preferably Leu, but may be other amino acids including Pro although not Arg or Lys, and Yaa may be Pro. Amino acid amides and methyl esters are also readily hydrolyzed, but rates on arylamides are exceedingly low.. The enzyme catalyses Release of an N-terminal amino acid, preferentially leucine, but not glutamic or aspartic acids.. Presumably involved in the processing and regular turnover of intracellular proteins. Catalyzes the removal of unsubstituted N-terminal amino acids from various peptides. The sequence is that of Probable cytosol aminopeptidase from Chlorobium phaeobacteroides (strain DSM 266 / SMG 266 / 2430).